Consider the following 759-residue polypeptide: 1,4-alpha-glucan branching enzyme GlgB (759 aa).

Asp431 serves as the catalytic Nucleophile. Glu484 functions as the Proton donor in the catalytic mechanism.

This sequence belongs to the glycosyl hydrolase 13 family. GlgB subfamily. Monomer.

The catalysed reaction is Transfers a segment of a (1-&gt;4)-alpha-D-glucan chain to a primary hydroxy group in a similar glucan chain.. Its pathway is glycan biosynthesis; glycogen biosynthesis. Functionally, catalyzes the formation of the alpha-1,6-glucosidic linkages in glycogen by scission of a 1,4-alpha-linked oligosaccharide from growing alpha-1,4-glucan chains and the subsequent attachment of the oligosaccharide to the alpha-1,6 position. The protein is 1,4-alpha-glucan branching enzyme GlgB of Prochlorococcus marinus (strain MIT 9211).